An 871-amino-acid polypeptide reads, in one-letter code: Translation initiation factor IF-2 (871 aa).

2 disordered regions span residues 60 to 101 and 184 to 203; these read KKNI…QEVK and ESLKKKKKEKKSFVASKKES. The segment covering 61 to 72 has biased composition (basic residues); it reads KNIKTPTAKKPK. The span at 73 to 101 shows a compositional bias: basic and acidic residues; that stretch reads KENIKEQEKLNESEKKEPKKEEKLKQEVK. The tr-type G domain occupies 370-537; the sequence is TRAPVITIMG…IVLLQADILE (168 aa). The tract at residues 379 to 386 is G1; the sequence is GHVDHGKT. Residue 379 to 386 coordinates GTP; the sequence is GHVDHGKT. The tract at residues 404–408 is G2; the sequence is GITQH. A G3 region spans residues 425–428; the sequence is DTPG. GTP-binding positions include 425–429 and 479–482; these read DTPGH and NKMD. The segment at 479–482 is G4; that stretch reads NKMD. The interval 515–517 is G5; sequence SAK.

This sequence belongs to the TRAFAC class translation factor GTPase superfamily. Classic translation factor GTPase family. IF-2 subfamily.

The protein localises to the cytoplasm. Functionally, one of the essential components for the initiation of protein synthesis. Protects formylmethionyl-tRNA from spontaneous hydrolysis and promotes its binding to the 30S ribosomal subunits. Also involved in the hydrolysis of GTP during the formation of the 70S ribosomal complex. The sequence is that of Translation initiation factor IF-2 from Campylobacter jejuni (strain RM1221).